Here is a 203-residue protein sequence, read N- to C-terminus: MENNVKKETIVDSEKVEKQQPVTAPVVNKKENTQPKAKTFKRETTTSNFEERVVKIKRISKTTKGGRMMRFSALVVIGDKNGTVGFGMGKSIEVPDAIKKAIKNANNNLIKVKQTKKGSIYHDVNGRHGAAKVMLLPAPEGTGIIAGGPVRAVVELAGFTDIYTKSRGANAPMNVIRATINGLLQQLTPQEIARLRDKSLKEL.

A compositionally biased stretch (basic and acidic residues) spans 1–18 (MENNVKKETIVDSEKVEK). The interval 1–36 (MENNVKKETIVDSEKVEKQQPVTAPVVNKKENTQPK) is disordered. The 64-residue stretch at 49 to 112 (FEERVVKIKR…KNANNNLIKV (64 aa)) folds into the S5 DRBM domain.

The protein belongs to the universal ribosomal protein uS5 family. As to quaternary structure, part of the 30S ribosomal subunit. Contacts proteins S4 and S8.

Functionally, with S4 and S12 plays an important role in translational accuracy. Its function is as follows. Located at the back of the 30S subunit body where it stabilizes the conformation of the head with respect to the body. This Ureaplasma urealyticum serovar 10 (strain ATCC 33699 / Western) protein is Small ribosomal subunit protein uS5.